Consider the following 212-residue polypeptide: Ribonuclease HII (212 aa).

The RNase H type-2 domain maps to 1–199; it reads MIGGIDEAGR…VGGRIGLGRN (199 aa). A divalent metal cation is bound by residues Asp6, Glu7, and Asp101.

It belongs to the RNase HII family. The cofactor is Mn(2+). It depends on Mg(2+) as a cofactor.

Its subcellular location is the cytoplasm. It carries out the reaction Endonucleolytic cleavage to 5'-phosphomonoester.. In terms of biological role, endonuclease that specifically degrades the RNA of RNA-DNA hybrids. This chain is Ribonuclease HII, found in Pyrobaculum aerophilum (strain ATCC 51768 / DSM 7523 / JCM 9630 / CIP 104966 / NBRC 100827 / IM2).